Consider the following 312-residue polypeptide: Pre-mRNA-splicing factor 38A (312 aa).

The interval 1–179 (MANRTVKDAH…VLEEAEQLEP (179 aa)) is N-terminal protein interaction domain. 5 positions are modified to phosphoserine: serine 11, serine 193, serine 194, serine 209, and serine 226. Positions 170-204 (VLEEAEQLEPRVSALEEDMDDVESSEEEEEEDEKL) form a coiled coil. Residues 181-312 (VSALEEDMDD…SHKKSRRGNE (132 aa)) form a disordered region. Over residues 184 to 202 (LEEDMDDVESSEEEEEEDE) the composition is skewed to acidic residues. Residues 203-224 (KLERVPSPDHRRRSYRDLDKPR) are compositionally biased toward basic and acidic residues. Composition is skewed to basic residues over residues 225–294 (RSPA…RSHS) and 301–312 (KKSHKKSRRGNE).

Belongs to the PRP38 family. Component of the spliceosome B complex. Interacts (via N-terminal interaction domain) with ZMAT2 and MFAP1.

It localises to the nucleus. Functionally, involved in pre-mRNA splicing as a component of the spliceosome. This is Pre-mRNA-splicing factor 38A (Prpf38a) from Mus musculus (Mouse).